The primary structure comprises 305 residues: Regulator of microtubule dynamics protein 1 (305 aa).

Lys-160 carries the post-translational modification N6-succinyllysine. TPR repeat units lie at residues 163–199 and 217–253; these read AICI…NPKD and PWYQ…DPNF. Residue Lys-245 is modified to N6-succinyllysine.

The protein belongs to the RMDN family. In terms of assembly, interacts with microtubules.

It is found in the cytoplasm. The protein localises to the cytoskeleton. It localises to the spindle. The protein resides in the spindle pole. This chain is Regulator of microtubule dynamics protein 1 (Rmdn1), found in Mus musculus (Mouse).